The following is a 142-amino-acid chain: Hemoglobin subunit alpha-I/II (142 aa).

One can recognise a Globin domain in the interval 2 to 142 (VLSAADKGNV…VSTVLTSKYR (141 aa)). Residue serine 4 is modified to Phosphoserine. N6-succinyllysine is present on residues lysine 8 and lysine 12. Lysine 17 carries the post-translational modification N6-acetyllysine; alternate. Lysine 17 is modified (N6-succinyllysine; alternate). Tyrosine 25 carries the phosphotyrosine modification. Phosphoserine is present on serine 36. Residue lysine 41 is modified to N6-succinyllysine. Serine 50 carries the phosphoserine modification. Histidine 59 contributes to the O2 binding site. Histidine 88 is a binding site for heme b. Serine 103 is modified (phosphoserine). A Phosphothreonine modification is found at threonine 109. Serine 125 is subject to Phosphoserine. Phosphothreonine is present on residues threonine 135 and threonine 138. The residue at position 139 (serine 139) is a Phosphoserine.

This sequence belongs to the globin family. In terms of assembly, heterotetramer of two alpha chains and two beta chains. As to expression, red blood cells.

Its function is as follows. Involved in oxygen transport from the lung to the various peripheral tissues. In Bison bonasus (European bison), this protein is Hemoglobin subunit alpha-I/II.